The primary structure comprises 154 residues: PTTG1IP family member 2 (154 aa).

The signal sequence occupies residues 1 to 26 (MCWLRAWGQILLPVFLSLFLIQLLIS). The Extracellular segment spans residues 27–97 (FSENGFIHSP…SIYWLNCKVD (71 aa)). The chain crosses the membrane as a helical span at residues 98-118 (MFGIMMLLLIAVLITGFVWYC). Residues 119 to 154 (CAYHFYLQDLNRNRVYFYGRRETVPIHDRSATVYDE) are Cytoplasmic-facing.

It is found in the membrane. The sequence is that of PTTG1IP family member 2 from Homo sapiens (Human).